The primary structure comprises 191 residues: MAGERERGGRERSRDREERDSEFVDKLVHINRVAKVVKGGKRFGFAALVVIGDQKGRVGFGHGKAREVPEAIRKATESAKRNLTRVPLREGRTLHHDIAGRHGAGRVYLRAAPAGTGIIAGGPMRAVFETLGIQDVVAKSVGSSNPYNMVRATFDALKHQDSPRSVSARRNIKVSTLQSRRVGGDAEAVAE.

Residues 1-20 (MAGERERGGRERSRDREERD) are disordered. One can recognise an S5 DRBM domain in the interval 23 to 86 (FVDKLVHINR…ESAKRNLTRV (64 aa)).

The protein belongs to the universal ribosomal protein uS5 family. Part of the 30S ribosomal subunit. Contacts proteins S4 and S8.

With S4 and S12 plays an important role in translational accuracy. Functionally, located at the back of the 30S subunit body where it stabilizes the conformation of the head with respect to the body. The polypeptide is Small ribosomal subunit protein uS5 (Nitrobacter winogradskyi (strain ATCC 25391 / DSM 10237 / CIP 104748 / NCIMB 11846 / Nb-255)).